Consider the following 432-residue polypeptide: MFLPSTTNHSSAPLQKHLCLFCTFWALLFGSHGDNSVQEDFAESMLLFFADAEGYFAACTTDTTMNSSLSEPLYVPVKFHDLPSEKPESTNIDTEKTPKKSRVRFSNIMEIRQLPSSHALEAKLSRMSYPVKEQESILKTVGKLTATQVAKISFFFCFVWFLANLSYQEALSDTQVAIVNILSSTSGLFTLILAAVFPSNSGDRFTLSKLLAVILSIGGVVLVNLSGSEKSAGRNTIGSIWSLAGAMLYAVYIVMIKRKVDREDKLDIPMFFGFVGLFNLLLLWPGFFLLHYTGFEDFEFPNKVVLMCIIINGLIGTVLSEFLWLWGCFLTSSLIGTLALSLTIPLSIIADMCMQKVQFSWLFFAGAIPVFFSFFIVTLLCHYNNWDPVMVGIRRIFAFICRKHRIQRVPEDSEQCESLISMHSVSQEDGAS.

Residues 1 to 33 form the signal peptide; it reads MFLPSTTNHSSAPLQKHLCLFCTFWALLFGSHG. The residue at position 116 (serine 116) is a Phosphoserine. 8 consecutive transmembrane segments (helical) span residues 152 to 172, 177 to 197, 205 to 225, 236 to 256, 270 to 290, 304 to 324, 329 to 349, and 361 to 381; these read ISFF…EALS, AIVN…AAVF, FTLS…LVNL, TIGS…IVMI, MFFG…FFLL, VVLM…EFLW, FLTS…LSII, and WLFF…TLLC. An EamA domain is found at 161-225; that stretch reads FLANLSYQEA…SIGGVVLVNL (65 aa).

This sequence belongs to the SLC35F solute transporter family.

It localises to the membrane. Putative solute transporter. This is Solute carrier family 35 member F5 (SLC35F5) from Macaca fascicularis (Crab-eating macaque).